Reading from the N-terminus, the 80-residue chain is Acyl carrier protein (80 aa).

Residues 4-79 enclose the Carrier domain; the sequence is DEIFSKVRSI…DVVNFIKKRK (76 aa). S39 is modified (O-(pantetheine 4'-phosphoryl)serine).

The protein belongs to the acyl carrier protein (ACP) family. In terms of processing, 4'-phosphopantetheine is transferred from CoA to a specific serine of apo-ACP by AcpS. This modification is essential for activity because fatty acids are bound in thioester linkage to the sulfhydryl of the prosthetic group.

It is found in the cytoplasm. It functions in the pathway lipid metabolism; fatty acid biosynthesis. Functionally, carrier of the growing fatty acid chain in fatty acid biosynthesis. The protein is Acyl carrier protein of Borreliella burgdorferi (strain ATCC 35210 / DSM 4680 / CIP 102532 / B31) (Borrelia burgdorferi).